The sequence spans 397 residues: Serpin B10 (397 aa).

The Nuclear localization signal signature appears at 74–77; sequence KKRK.

The protein belongs to the serpin family. Ov-serpin subfamily.

The protein resides in the nucleus. Its subcellular location is the cytoplasm. Protease inhibitor that may play a role in the regulation of protease activities during hematopoiesis and apoptosis induced by TNF. May regulate protease activities in the cytoplasm and in the nucleus. This is Serpin B10 (SERPINB10) from Plecturocebus moloch (Dusky titi monkey).